The following is a 131-amino-acid chain: Ribosome-binding factor A (131 aa).

It belongs to the RbfA family. As to quaternary structure, monomer. Binds 30S ribosomal subunits, but not 50S ribosomal subunits or 70S ribosomes.

It localises to the cytoplasm. Functionally, one of several proteins that assist in the late maturation steps of the functional core of the 30S ribosomal subunit. Associates with free 30S ribosomal subunits (but not with 30S subunits that are part of 70S ribosomes or polysomes). Required for efficient processing of 16S rRNA. May interact with the 5'-terminal helix region of 16S rRNA. In Protochlamydia amoebophila (strain UWE25), this protein is Ribosome-binding factor A.